The following is a 325-amino-acid chain: Taste receptor type 2 member 7 (325 aa).

The Extracellular portion of the chain corresponds to 1–9 (MADKVQTTL). Residues 10 to 30 (LFLAVGEFSVGILGNAFIGLV) traverse the membrane as a helical segment. The Cytoplasmic segment spans residues 31–55 (NCMDWVKKRKIASIDLILTSLAISR). Residues 56–76 (ICLLCVILLDCFILVLYPDVY) traverse the membrane as a helical segment. At 77–94 (ATGKEMRIIDFFWTLTNH) the chain is on the extracellular side. A helical transmembrane segment spans residues 95–115 (LSIWFATCLSIYYFFRIANFF). Residues 116–128 (HPLFLWMKWRIDR) are Cytoplasmic-facing. Residues 129–149 (VISWILLGCVVLSVFISLPAT) traverse the membrane as a helical segment. Topologically, residues 150 to 187 (ENLNADFRFCVKAKRKTNLTWSCRVNKTQHASTKLFLN) are extracellular. N-linked (GlcNAc...) asparagine glycosylation is found at Asn167 and Asn175. A helical membrane pass occupies residues 188–208 (LATLLPFCVCLMSFFLLILSL). The Cytoplasmic segment spans residues 209–235 (RRHIRRMQLSATGCRDPSTEAHVRALK). A helical transmembrane segment spans residues 236–256 (AVISFLLLFIAYYLSFLVATS). Over 257–266 (SYFMPETELA) the chain is Extracellular. The chain crosses the membrane as a helical span at residues 267–287 (VIFGESIALIYPSSHSFILIL). Topologically, residues 288 to 319 (GNNKLRHASLKVIWKVMSILKGRKFQQHKQIG) are cytoplasmic.

Belongs to the G-protein coupled receptor T2R family.

It localises to the membrane. Gustducin-coupled receptor implicated in the perception of bitter compounds in the oral cavity and the gastrointestinal tract. Signals through PLCB2 and the calcium-regulated cation channel TRPM5. This chain is Taste receptor type 2 member 7 (TAS2R7), found in Pan paniscus (Pygmy chimpanzee).